The sequence spans 125 residues: MAGSSLACCLLGLLALTSACYIQNCPLGGKRAVLDLDVRTCLPCGPGGKGRCFGPSICCGDELGCFVGTAEALRCREENYLPSPCQSGQKPCGSGGRCAAAGICCSPDGCHADPACDPEAAFSQH.

A signal peptide spans 1 to 19 (MAGSSLACCLLGLLALTSA). The cysteines at positions 20 and 25 are disulfide-linked. Gly-28 carries the post-translational modification Glycine amide. 7 disulfide bridges follow: Cys-41–Cys-85, Cys-44–Cys-58, Cys-52–Cys-75, Cys-59–Cys-65, Cys-92–Cys-104, Cys-98–Cys-116, and Cys-105–Cys-110.

The protein belongs to the vasopressin/oxytocin family. Interacts with oxytocin receptor (Ki=1.5 nM). Interacts with vasopressin V1aR/AVPR1A (Ki=37 nM), V1bR/AVPR1B (Ki=222 nM), and V2R/AVPR2 receptors (Ki=823 nM).

Its function is as follows. Neurophysin 1 specifically binds oxytocin. Functionally, oxytocin causes contraction of the smooth muscle of the uterus and of the mammary gland. Acts by binding to oxytocin receptor (OXTR). The protein is Oxytocin-neurophysin 1 (OXT) of Ovis aries (Sheep).